Reading from the N-terminus, the 782-residue chain is Small RNA degrading nuclease 3 (782 aa).

Residues Met145–Val296 form the Exonuclease domain. The region spanning Ala331 to Gly410 is the RRM 1 domain. Residues Pro426–Arg464 form a disordered region. The 81-residue stretch at Thr469–Gly549 folds into the RRM 2 domain. A disordered region spans residues Asp563–Ala605. Positions Glu577–Ala605 form a coiled coil. A compositionally biased stretch (basic and acidic residues) spans Thr595–Ala605. The RRM 3 domain occupies Thr608 to Gly688. Positions Ala709–Lys779 form a coiled coil.

This sequence belongs to the REXO1/REXO3 family. As to quaternary structure, associated with the Mediator complex.

The protein resides in the nucleus. In terms of biological role, 3'-5' exonuclease degrading single-stranded small RNAs. In Arabidopsis thaliana (Mouse-ear cress), this protein is Small RNA degrading nuclease 3 (SDN3).